A 381-amino-acid chain; its full sequence is Prokineticin receptor 2 (381 aa).

Residues 1 to 51 (MGPQNRNTSFAPDLNPPQDHVSLNYSYGDYDLPLGEDEDVTKTQTFFAAKI) are Extracellular-facing. N-linked (GlcNAc...) asparagine glycans are attached at residues asparagine 7 and asparagine 24. The chain crosses the membrane as a helical span at residues 52–72 (VIGVALAGIMLVCGIGNFVFI). Topologically, residues 73-86 (AALARYKKLRNLTN) are cytoplasmic. The helical transmembrane segment at 87 to 107 (LLIANLAISDFLVAIVCCPFE) threads the bilayer. Residues 108–133 (MDYYVVRQLSWAHGHVLCASVNYLRT) are Extracellular-facing. The cysteines at positions 125 and 205 are disulfide-linked. Residues 134–154 (VSLYVSTNALLAIAIDRYLAI) traverse the membrane as a helical segment. The Cytoplasmic segment spans residues 155-168 (VHPLKPRMNYQTAS). A helical membrane pass occupies residues 169–189 (FLIALVWMVSILIAVPSAYFT). The Extracellular segment spans residues 190 to 220 (TETILVIVKNQEKIFCGQIWSVDQQLYYKSY). Residues 221-241 (FLFVFGLEFVGPVVTMTLCYA) form a helical membrane-spanning segment. The Cytoplasmic portion of the chain corresponds to 242-270 (RISQELWFKAVPGFQTEQIRKRLRCRRKT). The helical transmembrane segment at 271 to 291 (VLLLMGILTAYVLCWAPFYGF) threads the bilayer. At 292–310 (TIVRDFFPTVVVKEKHYLT) the chain is on the extracellular side. The helical transmembrane segment at 311–331 (AFYVVECIAMSNSMINTICFV) threads the bilayer. Over 332–381 (TVKNNTMKYFKKMLRLHWRPSHYGSKSSADLDLKTSGVPATEEVDCIRLK) the chain is Cytoplasmic.

It belongs to the G-protein coupled receptor 1 family. Homodimer. As to expression, expressed in several regions of the brain, including paraventricular hypothalamic nucleus, dorsal medial hypothalamic nucleus, paratenial thalamic nuclei, paracentral thalamic nucleus, lateral habenular nucleus, lateral septal nucleus, lateral globus pallidus and amygdala. Highest expression seen in paraventricular thalamic nuclei and is also extensively expressed in the suprachiasmatic nucleus.

It is found in the cell membrane. Receptor for prokineticin 2. Exclusively coupled to the G(q) subclass of heteromeric G proteins. Activation leads to mobilization of calcium, stimulation of phosphoinositide turnover and activation of p44/p42 mitogen-activated protein kinase. The sequence is that of Prokineticin receptor 2 (Prokr2) from Mus musculus (Mouse).